The chain runs to 263 residues: Probable elongation factor 1-beta/1-delta 2 (263 aa).

The residue at position 2 (serine 2) is an N-acetylserine. The segment at 112–153 is disordered; that stretch reads QGQTSSVAAPAAAPAAAKEEAAGDDDFDLFGSEDEEEDEEKK. Positions 133-150 are enriched in acidic residues; the sequence is AGDDDFDLFGSEDEEEDE.

The protein belongs to the EF-1-beta/EF-1-delta family. In terms of assembly, EF-1 is composed of 4 subunits: alpha, beta, delta, and gamma.

In terms of biological role, EF-1-beta and EF-1-delta stimulate the exchange of GDP bound to EF-1-alpha to GTP. The chain is Probable elongation factor 1-beta/1-delta 2 from Caenorhabditis elegans.